Consider the following 85-residue polypeptide: U4-theraphotoxin-Hhn1a (85 aa).

Residues 1 to 22 (MKVTLIAILTCAAVLVLHTTAA) form the signal peptide. A propeptide spanning residues 23–48 (EELEAESQLMEVGMPDTELEAVDEER) is cleaved from the precursor. 3 cysteine pairs are disulfide-bonded: C52–C66, C56–C77, and C71–C82.

This sequence belongs to the neurotoxin 12 (Hwtx-2) family. 02 (Hwtx-2) subfamily. Monomer. In terms of tissue distribution, expressed by the venom gland.

The protein resides in the secreted. In terms of biological role, neurotoxin active on both insects and mammals. This is U4-theraphotoxin-Hhn1a from Cyriopagopus hainanus (Chinese bird spider).